Here is a 508-residue protein sequence, read N- to C-terminus: Cobyric acid synthase (508 aa).

Residues 266-464 (SLRIAVVAYP…AHGLFESTEV (199 aa)) enclose the GATase cobBQ-type domain. The Nucleophile role is filled by Cys-347. His-456 is an active-site residue.

The protein belongs to the CobB/CobQ family. CobQ subfamily.

It functions in the pathway cofactor biosynthesis; adenosylcobalamin biosynthesis. Functionally, catalyzes amidations at positions B, D, E, and G on adenosylcobyrinic A,C-diamide. NH(2) groups are provided by glutamine, and one molecule of ATP is hydrogenolyzed for each amidation. This chain is Cobyric acid synthase, found in Methylibium petroleiphilum (strain ATCC BAA-1232 / LMG 22953 / PM1).